A 102-amino-acid polypeptide reads, in one-letter code: Inner membrane protein YaiY (102 aa).

Residues 1 to 24 (MADFTLSKSLFSGKYRNASSTPGN) are Cytoplasmic-facing. The helical transmembrane segment at 25–45 (IAYALFVLFCFWAGAQLLNLL) threads the bilayer. At 46–74 (VHAPGVYERLMQVQETGRPRVEIGLGVGT) the chain is on the periplasmic side. A helical transmembrane segment spans residues 75-95 (IFGLIPFLVGCLIFAVVALWL). Topologically, residues 96-102 (HWRHRRQ) are cytoplasmic.

It localises to the cell inner membrane. This is Inner membrane protein YaiY (yaiY) from Escherichia coli O157:H7.